Reading from the N-terminus, the 53-residue chain is UPF0391 membrane protein YtjA (53 aa).

Helical transmembrane passes span 4-24 (WGII…GGLA) and 30-48 (AAKI…SLFM).

This sequence belongs to the UPF0391 family.

It localises to the cell membrane. This chain is UPF0391 membrane protein YtjA, found in Salmonella agona (strain SL483).